Here is a 177-residue protein sequence, read N- to C-terminus: Acireductone dioxygenase (177 aa).

The tract at residues 1–23 is disordered; sequence MVRAWYMDDSDADQRAPHMTDPP. Fe(2+) is bound by residues His86, His88, Glu92, and His131. Ni(2+) contacts are provided by His86, His88, Glu92, and His131.

The protein belongs to the acireductone dioxygenase (ARD) family. Fe(2+) serves as cofactor. It depends on Ni(2+) as a cofactor.

It localises to the cytoplasm. It is found in the nucleus. The catalysed reaction is 1,2-dihydroxy-5-(methylsulfanyl)pent-1-en-3-one + O2 = 4-methylsulfanyl-2-oxobutanoate + formate + 2 H(+). It catalyses the reaction 1,2-dihydroxy-5-(methylsulfanyl)pent-1-en-3-one + O2 = 3-(methylsulfanyl)propanoate + CO + formate + 2 H(+). It functions in the pathway amino-acid biosynthesis; L-methionine biosynthesis via salvage pathway; L-methionine from S-methyl-5-thio-alpha-D-ribose 1-phosphate: step 5/6. Catalyzes 2 different reactions between oxygen and the acireductone 1,2-dihydroxy-3-keto-5-methylthiopentene (DHK-MTPene) depending upon the metal bound in the active site. Fe-containing acireductone dioxygenase (Fe-ARD) produces formate and 2-keto-4-methylthiobutyrate (KMTB), the alpha-ketoacid precursor of methionine in the methionine recycle pathway. Ni-containing acireductone dioxygenase (Ni-ARD) produces methylthiopropionate, carbon monoxide and formate, and does not lie on the methionine recycle pathway. The polypeptide is Acireductone dioxygenase (Branchiostoma floridae (Florida lancelet)).